The primary structure comprises 178 residues: MLEGVIRESITKANAKALKKDGYLIANVYGKGIENVNCAFKLNPFIKYLKEKKHLIFPVKLGDKTFEVVVQEYQKNPVTNELIHVDLLAVTKGVKSKFKVPVKHQGTPVGLKNKGILMLSKKRISVECAPEHLPDHYLVDVAPLDVNESVLVRDLEKHENVKILDHDSIAVIGVIKAK.

The protein belongs to the bacterial ribosomal protein bL25 family. CTC subfamily. As to quaternary structure, part of the 50S ribosomal subunit; part of the 5S rRNA/L5/L18/L25 subcomplex. Contacts the 5S rRNA. Binds to the 5S rRNA independently of L5 and L18.

This is one of the proteins that binds to the 5S RNA in the ribosome where it forms part of the central protuberance. In Helicobacter pylori (strain P12), this protein is Large ribosomal subunit protein bL25.